The following is a 230-amino-acid chain: Ribonuclease 3 (230 aa).

The 130-residue stretch at 5 to 134 folds into the RNase III domain; it reads NDTISKVINY…LIGAIYIDGG (130 aa). Glu-47 is a Mg(2+) binding site. The active site involves Asp-51. The Mg(2+) site is built by Asn-120 and Glu-123. Glu-123 is an active-site residue. One can recognise a DRBM domain in the interval 159–228; the sequence is DPKTSLQEWT…AELILEKIKK (70 aa).

This sequence belongs to the ribonuclease III family. In terms of assembly, homodimer. Requires Mg(2+) as cofactor.

It localises to the cytoplasm. The catalysed reaction is Endonucleolytic cleavage to 5'-phosphomonoester.. Digests double-stranded RNA. Involved in the processing of primary rRNA transcript to yield the immediate precursors to the large and small rRNAs (23S and 16S). Processes some mRNAs, and tRNAs when they are encoded in the rRNA operon. Processes pre-crRNA and tracrRNA of type II CRISPR loci if present in the organism. This chain is Ribonuclease 3, found in Wolbachia pipientis subsp. Culex pipiens (strain wPip).